The following is a 423-amino-acid chain: Peroxisomal membrane protein PMP47A (423 aa).

Solcar repeat units lie at residues Tyr6–Thr120, Leu142–Phe230, and Ile239–Leu373. The chain crosses the membrane as a helical span at residues Ala12–Leu32. Residues Lys43 to Ser53 show a composition bias toward basic and acidic residues. The tract at residues Lys43 to Ser70 is disordered. The span at Glu55–Ser70 shows a compositional bias: polar residues. 4 helical membrane-spanning segments follow: residues Ser98–Gly118, Met148–Ala168, Phe204–Phe224, and Leu245–Leu265. The disordered stretch occupies residues Ser278 to Lys308. Residues Leu353–Leu373 traverse the membrane as a helical segment.

The protein belongs to the mitochondrial carrier (TC 2.A.29) family.

The protein localises to the peroxisome membrane. In terms of biological role, may have transport activity. This is Peroxisomal membrane protein PMP47A (PMP47A) from Candida boidinii (Yeast).